A 256-amino-acid chain; its full sequence is Pimeloyl-[acyl-carrier protein] methyl ester esterase (256 aa).

The region spanning 15–242 is the AB hydrolase-1 domain; that stretch reads HLVLLHGWGL…AAHAPFISHP (228 aa). Substrate-binding positions include Trp-22, 82-83, and 143-147; these read SL and FLALQ. Ser-82 serves as the catalytic Nucleophile. Catalysis depends on residues Asp-207 and His-235. His-235 lines the substrate pocket.

Belongs to the AB hydrolase superfamily. Carboxylesterase BioH family. In terms of assembly, monomer.

It localises to the cytoplasm. The catalysed reaction is 6-carboxyhexanoyl-[ACP] methyl ester + H2O = 6-carboxyhexanoyl-[ACP] + methanol + H(+). It participates in cofactor biosynthesis; biotin biosynthesis. Its function is as follows. The physiological role of BioH is to remove the methyl group introduced by BioC when the pimeloyl moiety is complete. It allows to synthesize pimeloyl-ACP via the fatty acid synthetic pathway through the hydrolysis of the ester bonds of pimeloyl-ACP esters. The polypeptide is Pimeloyl-[acyl-carrier protein] methyl ester esterase (Salmonella choleraesuis (strain SC-B67)).